We begin with the raw amino-acid sequence, 973 residues long: E3 ubiquitin-protein ligase MIB2 (973 aa).

The region spanning 1-80 (MDLDPHAGVQ…AHDLLLYDNA (80 aa)) is the MIB/HERC2 1 domain. Residues 86–138 (HPNIICDCCKKHGLRGMRWKCRVCFDYDLCTQCYMHNKHDLTHAFERYETSHS) form a ZZ-type zinc finger. Positions 91, 94, 106, 109, 115, 118, 124, and 128 each coordinate Zn(2+). Positions 149-227 (LPRIPLRGIF…KVDLRCVGEA (79 aa)) constitute an MIB/HERC2 2 domain. Position 251 is a phosphoserine (S251). ANK repeat units lie at residues 480-509 (QGRT…SMDL), 513-542 (EGNT…AVDA), 546-575 (TRST…DVNL), 579-611 (HADT…DVTA), 615-644 (QGFT…QLVD), 649-679 (DGFT…DVNV), 683-712 (KLQS…SVNT), 716-744 (EGDT…DPGP), and 785-814 (RGRS…ERQA). RING-type zinc fingers lie at residues 850–885 (CLVC…IRCQ) and 929–962 (CPIC…PICR).

In terms of assembly, interacts with actin monomer. In terms of processing, ubiquitinated. Possibly via autoubiquitination. As to expression, highly expressed in brain, heart, liver and kidney.

The protein localises to the cytoplasm. Its subcellular location is the endosome. The catalysed reaction is S-ubiquitinyl-[E2 ubiquitin-conjugating enzyme]-L-cysteine + [acceptor protein]-L-lysine = [E2 ubiquitin-conjugating enzyme]-L-cysteine + N(6)-ubiquitinyl-[acceptor protein]-L-lysine.. Its pathway is protein modification; protein ubiquitination. Functionally, E3 ubiquitin-protein ligase that mediates ubiquitination of Delta receptors, which act as ligands of Notch proteins. Positively regulates the Delta-mediated Notch signaling by ubiquitinating the intracellular domain of Delta, leading to endocytosis of Delta receptors. This is E3 ubiquitin-protein ligase MIB2 (Mib2) from Mus musculus (Mouse).